We begin with the raw amino-acid sequence, 168 residues long: Crossover junction endodeoxyribonuclease RuvC (168 aa).

Active-site residues include D7, E67, and H139. Mg(2+)-binding residues include D7, E67, and H139.

This sequence belongs to the RuvC family. As to quaternary structure, homodimer which binds Holliday junction (HJ) DNA. The HJ becomes 2-fold symmetrical on binding to RuvC with unstacked arms; it has a different conformation from HJ DNA in complex with RuvA. In the full resolvosome a probable DNA-RuvA(4)-RuvB(12)-RuvC(2) complex forms which resolves the HJ. The cofactor is Mg(2+).

It localises to the cytoplasm. It carries out the reaction Endonucleolytic cleavage at a junction such as a reciprocal single-stranded crossover between two homologous DNA duplexes (Holliday junction).. The RuvA-RuvB-RuvC complex processes Holliday junction (HJ) DNA during genetic recombination and DNA repair. Endonuclease that resolves HJ intermediates. Cleaves cruciform DNA by making single-stranded nicks across the HJ at symmetrical positions within the homologous arms, yielding a 5'-phosphate and a 3'-hydroxyl group; requires a central core of homology in the junction. The consensus cleavage sequence is 5'-(A/T)TT(C/G)-3'. Cleavage occurs on the 3'-side of the TT dinucleotide at the point of strand exchange. HJ branch migration catalyzed by RuvA-RuvB allows RuvC to scan DNA until it finds its consensus sequence, where it cleaves and resolves the cruciform DNA. This Deinococcus geothermalis (strain DSM 11300 / CIP 105573 / AG-3a) protein is Crossover junction endodeoxyribonuclease RuvC.